We begin with the raw amino-acid sequence, 51 residues long: MARNKPLAKKLRLAKAMKQNRRVPVWVIVKTNRRVLTHPKRRHWRRTKLKE.

The protein belongs to the eukaryotic ribosomal protein eL39 family.

This Pyrococcus abyssi (strain GE5 / Orsay) protein is Large ribosomal subunit protein eL39 (rpl39e).